A 234-amino-acid chain; its full sequence is 5'-methylthioadenosine/S-adenosylhomocysteine nucleosidase (234 aa).

Glu-12 functions as the Proton acceptor in the catalytic mechanism. Substrate is bound by residues Gly-78, Ile-152, and 173–174; that span reads ME. Residue Asp-197 is the Proton donor of the active site.

The protein belongs to the PNP/UDP phosphorylase family. MtnN subfamily.

It carries out the reaction S-adenosyl-L-homocysteine + H2O = S-(5-deoxy-D-ribos-5-yl)-L-homocysteine + adenine. The catalysed reaction is S-methyl-5'-thioadenosine + H2O = 5-(methylsulfanyl)-D-ribose + adenine. It catalyses the reaction 5'-deoxyadenosine + H2O = 5-deoxy-D-ribose + adenine. Its pathway is amino-acid biosynthesis; L-methionine biosynthesis via salvage pathway; S-methyl-5-thio-alpha-D-ribose 1-phosphate from S-methyl-5'-thioadenosine (hydrolase route): step 1/2. In terms of biological role, catalyzes the irreversible cleavage of the glycosidic bond in both 5'-methylthioadenosine (MTA) and S-adenosylhomocysteine (SAH/AdoHcy) to adenine and the corresponding thioribose, 5'-methylthioribose and S-ribosylhomocysteine, respectively. Also cleaves 5'-deoxyadenosine, a toxic by-product of radical S-adenosylmethionine (SAM) enzymes, into 5-deoxyribose and adenine. The polypeptide is 5'-methylthioadenosine/S-adenosylhomocysteine nucleosidase (Desulfotalea psychrophila (strain LSv54 / DSM 12343)).